Reading from the N-terminus, the 249-residue chain is DNA polymerase sliding clamp (249 aa).

The protein belongs to the PCNA family. As to quaternary structure, homotrimer. The subunits circularize to form a toroid; DNA passes through its center. Replication factor C (RFC) is required to load the toroid on the DNA.

In terms of biological role, sliding clamp subunit that acts as a moving platform for DNA processing. Responsible for tethering the catalytic subunit of DNA polymerase and other proteins to DNA during high-speed replication. The protein is DNA polymerase sliding clamp of Thermococcus sibiricus (strain DSM 12597 / MM 739).